A 311-amino-acid polypeptide reads, in one-letter code: Homoserine kinase (311 aa).

ATP is bound at residue 96 to 106 (PLARGLGSSAA).

It belongs to the GHMP kinase family. Homoserine kinase subfamily.

The protein localises to the cytoplasm. The enzyme catalyses L-homoserine + ATP = O-phospho-L-homoserine + ADP + H(+). The protein operates within amino-acid biosynthesis; L-threonine biosynthesis; L-threonine from L-aspartate: step 4/5. Catalyzes the ATP-dependent phosphorylation of L-homoserine to L-homoserine phosphate. The sequence is that of Homoserine kinase from Natranaerobius thermophilus (strain ATCC BAA-1301 / DSM 18059 / JW/NM-WN-LF).